Reading from the N-terminus, the 121-residue chain is Ribosome-binding factor A (121 aa).

Belongs to the RbfA family. As to quaternary structure, monomer. Binds 30S ribosomal subunits, but not 50S ribosomal subunits or 70S ribosomes.

It is found in the cytoplasm. Its function is as follows. One of several proteins that assist in the late maturation steps of the functional core of the 30S ribosomal subunit. Associates with free 30S ribosomal subunits (but not with 30S subunits that are part of 70S ribosomes or polysomes). Required for efficient processing of 16S rRNA. May interact with the 5'-terminal helix region of 16S rRNA. The polypeptide is Ribosome-binding factor A (Brevibacillus brevis (strain 47 / JCM 6285 / NBRC 100599)).